We begin with the raw amino-acid sequence, 314 residues long: Oxidoreductase poxI (314 aa).

This sequence belongs to the NmrA-type oxidoreductase family. Isoflavone reductase subfamily.

It functions in the pathway secondary metabolite biosynthesis. Its function is as follows. Oxidoreductase; part of the gene cluster that mediates the biosynthesis of oxaleimides, cytotoxic compounds containing an unusual disubstituted succinimide moiety. The first step of the pathway is provided by the HR-PKS poxF that serves in a new mode of collaborative biosynthesis with the PKS-NRPS poxE, by providing the olefin containing amino acid substrate via the synthesis of an ACP-bound dec-4-enoate. The cytochrome P450 monooxygenase poxM-catalyzed oxidation at the alpha-position creates the enzyme-bound 2-hydroxydec-4-enoyl-ACP thioester, which may be prone to spontaneous hydrolysis to yield 2-hydroxydec-4-enoic acid due to increased electrophilicity of the carbonyl. 2-hydroxydec-4-enoic acid can then be further oxidized by poxM to yield the alpha-ketoacid 2-oxodec-4-enoicacid, which is reductively aminated by the aminotransferase poxL to yield (S,E)-2-aminodec-4-enoic acid. The Hybrid PKS-NRPS synthetase poxE then performs condensation between the octaketide product of its PKS modules and the amino group of (S,E)-2-aminodec-4-enoic acid which is activated and incorporated by the adenylation domain. The resulting aminoacyl product can be cyclized by the Diels-Alderase PoxQ and reductively released by the reductive (R) domain of poxE to yield an aldehyde intermediate. The released aldehyde is then substrate for a Knoevenagel condensation by the hydrolyase poxO followed by an oxidation at the 5-position of the pyrrolidone ring. The presence of the olefin from the amino acid building block allows for migration of the substituted allyl group to occur. This allylic transposition reaction takes place in a conjugate addition, semipinacol-like fashion to yield a succinimide intermediate. Iterative two-electron oxidations of the C7 methyl of the succinimide intermediate to the carboxylic acid can be catalyzed by one of two remaining cytochrome P450 monooxygenasess poxC or poxD to yield oxaleimide A. Subsequent oxidation yields the maleimide scaffold oxaleimide I. Both oxaleimide A and oxaleimide I can undergo oxidative modifications in the decalin ring to yield the series of products oxaleimides B to H. The sequence is that of Oxidoreductase poxI from Penicillium oxalicum (strain 114-2 / CGMCC 5302) (Penicillium decumbens).